Consider the following 188-residue polypeptide: Protein-export protein SecB (188 aa).

Disordered stretches follow at residues 1–21 and 160–188; these read MADE…EQPK and RQKA…DTQQ. The segment covering 176 to 188 has biased composition (polar residues); that stretch reads SDSTAAQGSDTQQ.

The protein belongs to the SecB family. Homotetramer, a dimer of dimers. One homotetramer interacts with 1 SecA dimer.

The protein resides in the cytoplasm. In terms of biological role, one of the proteins required for the normal export of preproteins out of the cell cytoplasm. It is a molecular chaperone that binds to a subset of precursor proteins, maintaining them in a translocation-competent state. It also specifically binds to its receptor SecA. This Alkalilimnicola ehrlichii (strain ATCC BAA-1101 / DSM 17681 / MLHE-1) protein is Protein-export protein SecB.